A 179-amino-acid polypeptide reads, in one-letter code: Natural killer cells antigen CD94 (179 aa).

Over 1-10 the chain is Cytoplasmic; the sequence is MAVSQTTLWN. Residues 11 to 31 traverse the membrane as a helical; Signal-anchor for type II membrane protein segment; that stretch reads LISGILGVICLLLMTTMGILL. At 32–179 the chain is on the extracellular side; that stretch reads KNLLLTESIQ…SRFICKQELM (148 aa). 4 cysteine pairs are disulfide-bonded: cysteine 58/cysteine 70, cysteine 61/cysteine 72, cysteine 89/cysteine 174, and cysteine 152/cysteine 166. The region spanning 68–175 is the C-type lectin domain; it reads HQCNCYLFFD…CEDKSRFICK (108 aa). 2 N-linked (GlcNAc...) asparagine glycosylation sites follow: asparagine 93 and asparagine 125.

Can form disulfide-bonded heterodimer with NKG2 family members KLRC1 and KLRC2. KLRD1-KLRC1 heterodimer interacts with peptide-bound MHC-E-B2M heterotrimeric complex. KLRD1 plays a prominent role in directly interacting with MHC-E. KLRD1-KLRC1 interacts with much higher affinity with peptide-bound MHC-E-B2M than KLRD1-KLRC2. Interacts with the adapter protein TYROBP/DAP12; this interaction is required for cell surface expression and cell activation.

It localises to the cell membrane. In terms of biological role, immune receptor involved in self-nonself discrimination. In complex with KLRC1 or KLRC2 on cytotoxic and regulatory lymphocyte subsets, recognizes non-classical major histocompatibility (MHC) class Ib molecule MHC-E loaded with self-peptides derived from the signal sequence of classical MHC class Ia and non-classical MHC class Ib molecules. Enables cytotoxic cells to monitor the expression of MHC class I molecules in healthy cells and to tolerate self. Primarily functions as a ligand binding subunit as it lacks the capacity to signal. Functionally, KLRD1-KLRC1 acts as an immune inhibitory receptor. Key inhibitory receptor on natural killer (NK) cells that regulates their activation and effector functions. Dominantly counteracts T cell receptor signaling on a subset of memory/effector CD8-positive T cells as part of an antigen-driven response to avoid autoimmunity. On intraepithelial CD8-positive gamma-delta regulatory T cells triggers TGFB1 secretion, which in turn limits the cytotoxic programming of intraepithelial CD8-positive alpha-beta T cells, distinguishing harmless from pathogenic antigens. In MHC-E-rich tumor microenvironment, acts as an immune inhibitory checkpoint and may contribute to progressive loss of effector functions of NK cells and tumor-specific T cells, a state known as cell exhaustion. Upon MHC-E-peptide binding, transmits intracellular signals through KLRC1 immunoreceptor tyrosine-based inhibition motifs (ITIMs) by recruiting INPP5D/SHIP-1 and INPPL1/SHIP-2 tyrosine phosphatases to ITIMs, and ultimately opposing signals transmitted by activating receptors through dephosphorylation of proximal signaling molecules. Its function is as follows. KLRD1-KLRC2 acts as an immune activating receptor. On cytotoxic lymphocyte subsets recognizes MHC-E loaded with signal sequence-derived peptides from non-classical MHC class Ib MHC-G molecules, likely playing a role in the generation and effector functions of adaptive NK cells and in maternal-fetal tolerance during pregnancy. Regulates the effector functions of terminally differentiated cytotoxic lymphocyte subsets, and in particular may play a role in adaptive NK cell response to viral infection. Upon MHC-E-peptide binding, transmits intracellular signals via the adapter protein TYROBP/DAP12, triggering the phosphorylation of proximal signaling molecules and cell activation. The protein is Natural killer cells antigen CD94 (KLRD1) of Canis lupus familiaris (Dog).